A 346-amino-acid chain; its full sequence is c-di-GMP synthase (346 aa).

It belongs to the CD-NTase family.

It catalyses the reaction 2 GTP = 3',3'-c-di-GMP + 2 diphosphate. In terms of biological role, cyclic nucleotide synthase (second messenger synthase) of a CBASS antivirus system. CBASS (cyclic oligonucleotide-based antiphage signaling system) provides immunity against bacteriophage. The CD-NTase protein synthesizes cyclic nucleotides in response to infection; these serve as specific second messenger signals. The signals activate a diverse range of effectors, leading to bacterial cell death and thus abortive phage infection. A type I-D(GG) CBASS system. Functionally, cyclic dinucleotide synthase that catalyzes the synthesis of c-di-GMP, has no activity with other NTP substrates. The polypeptide is c-di-GMP synthase (Lachnospiraceae bacterium (strain RUG226)).